The sequence spans 101 residues: Small ribosomal subunit protein uS10 (101 aa).

This sequence belongs to the universal ribosomal protein uS10 family. In terms of assembly, part of the 30S ribosomal subunit.

In terms of biological role, involved in the binding of tRNA to the ribosomes. The chain is Small ribosomal subunit protein uS10 from Christiangramia forsetii (strain DSM 17595 / CGMCC 1.15422 / KT0803) (Gramella forsetii).